The chain runs to 612 residues: Dihydroxy-acid dehydratase (612 aa).

A Mg(2+)-binding site is contributed by Asp-81. Cys-122 serves as a coordination point for [2Fe-2S] cluster. Mg(2+)-binding residues include Asp-123 and Lys-124. N6-carboxylysine is present on Lys-124. Cys-193 lines the [2Fe-2S] cluster pocket. Position 489 (Glu-489) interacts with Mg(2+). Ser-515 functions as the Proton acceptor in the catalytic mechanism.

This sequence belongs to the IlvD/Edd family. In terms of assembly, homodimer. [2Fe-2S] cluster is required as a cofactor. It depends on Mg(2+) as a cofactor.

The enzyme catalyses (2R)-2,3-dihydroxy-3-methylbutanoate = 3-methyl-2-oxobutanoate + H2O. The catalysed reaction is (2R,3R)-2,3-dihydroxy-3-methylpentanoate = (S)-3-methyl-2-oxopentanoate + H2O. It participates in amino-acid biosynthesis; L-isoleucine biosynthesis; L-isoleucine from 2-oxobutanoate: step 3/4. It functions in the pathway amino-acid biosynthesis; L-valine biosynthesis; L-valine from pyruvate: step 3/4. In terms of biological role, functions in the biosynthesis of branched-chain amino acids. Catalyzes the dehydration of (2R,3R)-2,3-dihydroxy-3-methylpentanoate (2,3-dihydroxy-3-methylvalerate) into 2-oxo-3-methylpentanoate (2-oxo-3-methylvalerate) and of (2R)-2,3-dihydroxy-3-methylbutanoate (2,3-dihydroxyisovalerate) into 2-oxo-3-methylbutanoate (2-oxoisovalerate), the penultimate precursor to L-isoleucine and L-valine, respectively. The chain is Dihydroxy-acid dehydratase from Xanthomonas campestris pv. campestris (strain 8004).